The sequence spans 602 residues: Elongation factor 4 (602 aa).

The region spanning 7 to 189 (DKIRNFSIVA…AIVTRLPPPK (183 aa)) is the tr-type G domain. GTP contacts are provided by residues 19 to 24 (DHGKST) and 136 to 139 (NKVD).

It belongs to the TRAFAC class translation factor GTPase superfamily. Classic translation factor GTPase family. LepA subfamily.

The protein localises to the cell inner membrane. The catalysed reaction is GTP + H2O = GDP + phosphate + H(+). Required for accurate and efficient protein synthesis under certain stress conditions. May act as a fidelity factor of the translation reaction, by catalyzing a one-codon backward translocation of tRNAs on improperly translocated ribosomes. Back-translocation proceeds from a post-translocation (POST) complex to a pre-translocation (PRE) complex, thus giving elongation factor G a second chance to translocate the tRNAs correctly. Binds to ribosomes in a GTP-dependent manner. This Caulobacter vibrioides (strain NA1000 / CB15N) (Caulobacter crescentus) protein is Elongation factor 4.